The sequence spans 92 residues: Cell division protein FtsB (92 aa).

At 1–3 (MKV) the chain is on the cytoplasmic side. Residues 4–21 (VPILLFVLLAALQYRLWF) traverse the membrane as a helical segment. The Periplasmic segment spans residues 22 to 92 (GKNSIPEYVA…TFYRILPSEE (71 aa)). Residues 31–74 (AMEKSVAEQAEQNTELLQRNNLLKADIQDLKVGLEAVEERARNE) are a coiled coil.

This sequence belongs to the FtsB family. In terms of assembly, part of a complex composed of FtsB, FtsL and FtsQ.

It is found in the cell inner membrane. In terms of biological role, essential cell division protein. May link together the upstream cell division proteins, which are predominantly cytoplasmic, with the downstream cell division proteins, which are predominantly periplasmic. The protein is Cell division protein FtsB of Pseudoalteromonas atlantica (strain T6c / ATCC BAA-1087).